Here is a 353-residue protein sequence, read N- to C-terminus: Nicotinate-nucleotide--dimethylbenzimidazole phosphoribosyltransferase (353 aa).

The Proton acceptor role is filled by glutamate 318.

The protein belongs to the CobT family.

It carries out the reaction 5,6-dimethylbenzimidazole + nicotinate beta-D-ribonucleotide = alpha-ribazole 5'-phosphate + nicotinate + H(+). The protein operates within nucleoside biosynthesis; alpha-ribazole biosynthesis; alpha-ribazole from 5,6-dimethylbenzimidazole: step 1/2. Catalyzes the synthesis of alpha-ribazole-5'-phosphate from nicotinate mononucleotide (NAMN) and 5,6-dimethylbenzimidazole (DMB). The protein is Nicotinate-nucleotide--dimethylbenzimidazole phosphoribosyltransferase of Desulforudis audaxviator (strain MP104C).